The chain runs to 675 residues: DNA gyrase subunit B (675 aa).

A Toprim domain is found at 453–567 (SELYVVEGDS…NGHIFLAQPP (115 aa)). Residues glutamate 459, aspartate 532, and aspartate 534 each contribute to the Mg(2+) site.

This sequence belongs to the type II topoisomerase GyrB family. Heterotetramer, composed of two GyrA and two GyrB chains. In the heterotetramer, GyrA contains the active site tyrosine that forms a transient covalent intermediate with DNA, while GyrB binds cofactors and catalyzes ATP hydrolysis. The cofactor is Mg(2+). Mn(2+) serves as cofactor. Requires Ca(2+) as cofactor.

The protein localises to the cytoplasm. The catalysed reaction is ATP-dependent breakage, passage and rejoining of double-stranded DNA.. Its activity is regulated as follows. Inhibited by 4-quinoline drugs (nalidixic acid, ciprofloxacin, ofloxacin), although it is much less sensitive than the corresponding enzyme from E.coli. GyrB intrinsic ATPase activity inhibited by aminopyrazinamide and pyrrolamide derivatives. A type II topoisomerase that negatively supercoils closed circular double-stranded (ds) DNA in an ATP-dependent manner to modulate DNA topology and maintain chromosomes in an underwound state. Negative supercoiling favors strand separation, and DNA replication, transcription, recombination and repair, all of which involve strand separation. Also able to catalyze the interconversion of other topological isomers of dsDNA rings, including catenanes and knotted rings. Type II topoisomerases break and join 2 DNA strands simultaneously in an ATP-dependent manner. The protein is DNA gyrase subunit B of Mycolicibacterium smegmatis (strain ATCC 700084 / mc(2)155) (Mycobacterium smegmatis).